The primary structure comprises 387 residues: Chaperone protein DnaJ (387 aa).

The 65-residue stretch at 4–68 (DFYDVLGVSR…EKRQMYDQLG (65 aa)) folds into the J domain. The segment at 76–135 (EKRGGVGGGGNSSGGSARGDPFGGMGGQGSPFGDIFEQFFGGGQGQRRQGNRPRQGQNLQ) is disordered. Gly residues predominate over residues 80–105 (GVGGGGNSSGGSARGDPFGGMGGQGS). Low complexity predominate over residues 121–133 (QRRQGNRPRQGQN). The CR-type zinc-finger motif lies at 148–230 (GVEKQFTVRR…CNGDGVTRQE (83 aa)). Residues C161, C164, C178, C181, C204, C207, C218, and C221 each coordinate Zn(2+). CXXCXGXG motif repeat units lie at residues 161-168 (CPDCNGRG), 178-185 (CPQCNGQG), 204-211 (CPRCDGSG), and 218-225 (CSTCNGDG).

This sequence belongs to the DnaJ family. As to quaternary structure, homodimer. It depends on Zn(2+) as a cofactor.

The protein resides in the cytoplasm. Participates actively in the response to hyperosmotic and heat shock by preventing the aggregation of stress-denatured proteins and by disaggregating proteins, also in an autonomous, DnaK-independent fashion. Unfolded proteins bind initially to DnaJ; upon interaction with the DnaJ-bound protein, DnaK hydrolyzes its bound ATP, resulting in the formation of a stable complex. GrpE releases ADP from DnaK; ATP binding to DnaK triggers the release of the substrate protein, thus completing the reaction cycle. Several rounds of ATP-dependent interactions between DnaJ, DnaK and GrpE are required for fully efficient folding. Also involved, together with DnaK and GrpE, in the DNA replication of plasmids through activation of initiation proteins. This is Chaperone protein DnaJ from Haloquadratum walsbyi (strain DSM 16790 / HBSQ001).